A 353-amino-acid chain; its full sequence is Photosystem II D2 protein (353 aa).

T2 carries the post-translational modification N-acetylthreonine. The residue at position 2 (T2) is a Phosphothreonine. Residues 41–61 (CAYFALGGWFTGTTFVTSWYT) traverse the membrane as a helical segment. H118 is a binding site for chlorophyll a. A helical membrane pass occupies residues 125-141 (GFMLRQFELARSVQLRP). Residues Q130 and N143 each contribute to the pheophytin a site. A helical transmembrane segment spans residues 153-166 (VFVSVFLIYPLGQS). H198 is a binding site for chlorophyll a. The helical transmembrane segment at 208–228 (AALLCAIHGATVENTLFEDGD) threads the bilayer. A plastoquinone is bound by residues H215 and F262. Fe cation is bound at residue H215. H269 provides a ligand contact to Fe cation. The chain crosses the membrane as a helical span at residues 279–295 (GLWMSALGVVGLALNLR).

This sequence belongs to the reaction center PufL/M/PsbA/D family. In terms of assembly, PSII is composed of 1 copy each of membrane proteins PsbA, PsbB, PsbC, PsbD, PsbE, PsbF, PsbH, PsbI, PsbJ, PsbK, PsbL, PsbM, PsbT, PsbX, PsbY, PsbZ, Psb30/Ycf12, at least 3 peripheral proteins of the oxygen-evolving complex and a large number of cofactors. It forms dimeric complexes. The cofactor is The D1/D2 heterodimer binds P680, chlorophylls that are the primary electron donor of PSII, and subsequent electron acceptors. It shares a non-heme iron and each subunit binds pheophytin, quinone, additional chlorophylls, carotenoids and lipids. There is also a Cl(-1) ion associated with D1 and D2, which is required for oxygen evolution. The PSII complex binds additional chlorophylls, carotenoids and specific lipids..

It localises to the plastid. It is found in the chloroplast thylakoid membrane. It carries out the reaction 2 a plastoquinone + 4 hnu + 2 H2O = 2 a plastoquinol + O2. In terms of biological role, photosystem II (PSII) is a light-driven water:plastoquinone oxidoreductase that uses light energy to abstract electrons from H(2)O, generating O(2) and a proton gradient subsequently used for ATP formation. It consists of a core antenna complex that captures photons, and an electron transfer chain that converts photonic excitation into a charge separation. The D1/D2 (PsbA/PsbD) reaction center heterodimer binds P680, the primary electron donor of PSII as well as several subsequent electron acceptors. D2 is needed for assembly of a stable PSII complex. In Ranunculus macranthus (Large buttercup), this protein is Photosystem II D2 protein.